Here is an 87-residue protein sequence, read N- to C-terminus: Anaphase-promoting complex subunit 11 (87 aa).

The RING-type; atypical zinc finger occupies 35-77 (CVDCKIPGDDCPPVWGVCNHAFHMHCILKWLNANELQQCPMCR).

Belongs to the RING-box family. In terms of assembly, the APC/C is composed of at least 13 subunits that stay tightly associated throughout the cell cycle: anapc1, anapc2, anapc3, anapc4, anapc5, anapc6, anapc7, anapc8, anapc10, anapc11, cdc20, cdc26 and cdh1.

The protein resides in the nucleus. Its pathway is protein modification; protein ubiquitination. Functionally, component of the anaphase promoting complex/cyclosome (APC/C), a cell cycle-regulated E3 ubiquitin-protein ligase complex that controls progression through mitosis and the G1 phase of the cell cycle. This Dictyostelium discoideum (Social amoeba) protein is Anaphase-promoting complex subunit 11 (anapc11).